The following is a 442-amino-acid chain: Histidinol dehydrogenase (442 aa).

Tyr138, Gln196, and Asn219 together coordinate NAD(+). Substrate is bound by residues Ser245, Gln267, and His270. Residues Gln267 and His270 each contribute to the Zn(2+) site. Residues Glu334 and His335 each act as proton acceptor in the active site. His335, Asp368, Glu422, and His427 together coordinate substrate. A Zn(2+)-binding site is contributed by Asp368. His427 serves as a coordination point for Zn(2+).

It belongs to the histidinol dehydrogenase family. As to quaternary structure, homodimer. The cofactor is Zn(2+).

The catalysed reaction is L-histidinol + 2 NAD(+) + H2O = L-histidine + 2 NADH + 3 H(+). It participates in amino-acid biosynthesis; L-histidine biosynthesis; L-histidine from 5-phospho-alpha-D-ribose 1-diphosphate: step 9/9. Functionally, catalyzes the sequential NAD-dependent oxidations of L-histidinol to L-histidinaldehyde and then to L-histidine. This is Histidinol dehydrogenase from Pectobacterium atrosepticum (strain SCRI 1043 / ATCC BAA-672) (Erwinia carotovora subsp. atroseptica).